The chain runs to 53 residues: Mannose/glucose-specific lectin alpha chain (53 aa).

It belongs to the leguminous lectin family. In terms of assembly, heterodimer of an alpha and a beta chain.

In terms of biological role, this lectin specifically binds mannose and glucose. The protein is Mannose/glucose-specific lectin alpha chain of Vicia cracca (Bird vetch).